The chain runs to 485 residues: Glutamate mutase epsilon subunit (485 aa).

R66 is an L-glutamate binding site. An adenosylcob(III)alamin-binding site is contributed by G68. Residue R100 coordinates L-glutamate. Adenosylcob(III)alamin is bound at residue N123. Residues 149 to 150 (RH), E171, and Y177 contribute to the L-glutamate site. Adenosylcob(III)alamin is bound at residue P180. Y181 provides a ligand contact to L-glutamate. 4 residues coordinate adenosylcob(III)alamin: F297, K326, E330, and I334.

This sequence belongs to the methylaspartate mutase GlmE subunit family. Heterotetramer composed of 2 epsilon subunits (GlmE) and 2 sigma subunits (GlmS). GlmE exists as a homodimer and GlmS as a monomer. Requires adenosylcob(III)alamin as cofactor.

The catalysed reaction is (2S,3S)-3-methyl-L-aspartate = L-glutamate. It functions in the pathway amino-acid degradation; L-glutamate degradation via mesaconate pathway; acetate and pyruvate from L-glutamate: step 1/4. Catalyzes the carbon skeleton rearrangement of L-glutamate to L-threo-3-methylaspartate ((2S,3S)-3-methylaspartate). The polypeptide is Glutamate mutase epsilon subunit (Treponema denticola (strain ATCC 35405 / DSM 14222 / CIP 103919 / JCM 8153 / KCTC 15104)).